The sequence spans 1258 residues: Splicing factor, arginine/serine-rich 19 (1258 aa).

6 disordered regions span residues 1 to 32, 159 to 345, 370 to 398, 410 to 1034, 1114 to 1154, and 1223 to 1258; these read MEEE…LSPS, KTVS…PRRR, GGPA…EEEP, PRQP…PPPM, GSLP…DKYL, and FRKH…LPPL. A compositionally biased stretch (basic and acidic residues) spans 7 to 27; that stretch reads SRGKTEESGEDRGDGPPDRDP. A compositionally biased stretch (low complexity) spans 193-207; the sequence is SSASSSPSPSPSSSS. A compositionally biased stretch (pro residues) spans 208 to 223; it reads PSPPPPPPPPPPPALP. The segment covering 228–237 has biased composition (basic and acidic residues); that stretch reads DIYDPFHPTD. Phosphoserine is present on Ser-241. Residues 256-266 show a composition bias toward polar residues; sequence TGSNPSSSAGT. A compositionally biased stretch (acidic residues) spans 269 to 283; it reads PEEEEEEEEEEEEEG. Thr-329 carries the phosphothreonine modification. Pro residues predominate over residues 374–383; it reads LPLPPLPPTD. The span at 384-395 shows a compositional bias: acidic residues; the sequence is PEIEEGEIVQPE. Positions 414–426 are enriched in low complexity; it reads PASVATLASVAAP. 2 positions are modified to phosphoserine: Ser-444 and Ser-449. Over residues 480 to 491 the composition is skewed to basic residues; that stretch reads KILTQRRERYRQ. Ser-493, Ser-495, Ser-512, and Ser-520 each carry phosphoserine. 2 stretches are compositionally biased toward basic residues: residues 540 to 555 and 562 to 579; these read TARR…RSRS and RGSH…RRRS. Ser-579 and Ser-581 each carry phosphoserine. Residues 594–613 are compositionally biased toward basic residues; the sequence is RERHRGKRREGGKKKKKRSR. Residues 614 to 625 are compositionally biased toward basic and acidic residues; that stretch reads SRAEKRSGDLEK. Thr-665 bears the Phosphothreonine mark. A phosphoserine mark is found at Ser-678 and Ser-684. Phosphotyrosine is present on Tyr-691. 2 positions are modified to phosphoserine: Ser-693 and Ser-697. 2 stretches are compositionally biased toward basic and acidic residues: residues 698–711 and 721–743; these read ADER…DRRR and SREK…DRSS. Low complexity-rich tracts occupy residues 752 to 777 and 795 to 806; these read SAPG…SCSS and SSTTPAKDSSSS. Lys-814 is covalently cross-linked (Glycyl lysine isopeptide (Lys-Gly) (interchain with G-Cter in SUMO2)). Positions 815 to 833 are enriched in basic and acidic residues; it reads FSRDRESRSPFLKPDERAP. Ser-821 and Ser-823 each carry phosphoserine. A compositionally biased stretch (basic residues) spans 845 to 877; the sequence is KPKKTKAKAKAGAKKAKGTKGKTKPSKTRKKVR. Ser-878, Ser-885, Ser-912, and Ser-914 each carry phosphoserine. Over residues 924-937 the composition is skewed to pro residues; sequence STPPPKVAPPPPAL. A phosphothreonine mark is found at Thr-925 and Thr-938. Residues 940-949 are compositionally biased toward polar residues; the sequence is DSQTVDSSCK. Ser-941 carries the post-translational modification Phosphoserine. At Thr-950 the chain carries Phosphothreonine. Positions 971-986 are enriched in acidic residues; it reads EEEEEEEEEEEEEEEQ. The segment covering 987-1019 has biased composition (low complexity); the sequence is QPATTTATSTAAAAPSTAPSAGSTAGDSGAEDG. The necessary for interaction with the CTD domain of POLR2A stretch occupies residues 1133-1258; it reads PASDKREGSS…GGPGLPLPPL (126 aa). Residues 1135–1154 are compositionally biased toward basic and acidic residues; the sequence is SDKREGSSSSEGRGDTDKYL. Residues 1246–1258 show a composition bias toward pro residues; the sequence is PDKGGPGLPLPPL.

It belongs to the splicing factor SR family. In terms of assembly, interacts with POLR2A.

The protein localises to the nucleus. In terms of biological role, may function in pre-mRNA splicing. The protein is Splicing factor, arginine/serine-rich 19 (Scaf1) of Rattus norvegicus (Rat).